Here is a 93-residue protein sequence, read N- to C-terminus: MKTLVLLSALILLAYQVQTDPIQNTDEETNTEEQPGEDDQAVSVSFGGQEGSALHEKLSRDLICLCRNRRCNRGELFYGTCAGPFLRCCRRRR.

The signal sequence occupies residues 1-19; it reads MKTLVLLSALILLAYQVQT. Residues 20-58 constitute a propeptide that is removed on maturation; sequence DPIQNTDEETNTEEQPGEDDQAVSVSFGGQEGSALHEKL. The disordered stretch occupies residues 22–43; the sequence is IQNTDEETNTEEQPGEDDQAVS. Over residues 25–40 the composition is skewed to acidic residues; it reads TDEETNTEEQPGEDDQ. 3 disulfides stabilise this stretch: cysteine 64/cysteine 89, cysteine 66/cysteine 81, and cysteine 71/cysteine 88.

Belongs to the alpha-defensin family.

It localises to the secreted. May have microbicidal activities. This chain is Alpha-defensin 21 (Defa21), found in Mus musculus (Mouse).